The primary structure comprises 524 residues: uncharacterized protein (524 aa).

Positions 1–26 (MLKIDMWFKLKSLGFSLISLQALLAS) are cleaved as a signal peptide. Cys27 is lipidated: N-palmitoyl cysteine. Residue Cys27 is the site of S-diacylglycerol cysteine attachment. The disordered stretch occupies residues 37 to 68 (IEEKNDSTTDNNATPFKDEQSDQGTEVNQQPK). Positions 58–68 (DQGTEVNQQPK) are enriched in polar residues.

It belongs to the MG067/MG068/MG395 family.

It is found in the cell membrane. This is an uncharacterized protein from Mycoplasma genitalium (strain ATCC 33530 / DSM 19775 / NCTC 10195 / G37) (Mycoplasmoides genitalium).